The sequence spans 435 residues: Adenylosuccinate lyase (435 aa).

N(6)-(1,2-dicarboxyethyl)-AMP-binding positions include 4–5 (RY), 73–75 (RHD), and 99–100 (TS). The Proton donor/acceptor role is filled by histidine 147. Glutamine 218 contributes to the N(6)-(1,2-dicarboxyethyl)-AMP binding site. Serine 268 acts as the Proton donor/acceptor in catalysis. Residues serine 269, 274–276 (KKN), asparagine 282, and 313–317 (SAERV) contribute to the N(6)-(1,2-dicarboxyethyl)-AMP site.

It belongs to the lyase 1 family. Adenylosuccinate lyase subfamily. Homotetramer. Residues from neighboring subunits contribute catalytic and substrate-binding residues to each active site.

It catalyses the reaction N(6)-(1,2-dicarboxyethyl)-AMP = fumarate + AMP. The catalysed reaction is (2S)-2-[5-amino-1-(5-phospho-beta-D-ribosyl)imidazole-4-carboxamido]succinate = 5-amino-1-(5-phospho-beta-D-ribosyl)imidazole-4-carboxamide + fumarate. Its pathway is purine metabolism; AMP biosynthesis via de novo pathway; AMP from IMP: step 2/2. It functions in the pathway purine metabolism; IMP biosynthesis via de novo pathway; 5-amino-1-(5-phospho-D-ribosyl)imidazole-4-carboxamide from 5-amino-1-(5-phospho-D-ribosyl)imidazole-4-carboxylate: step 2/2. Functionally, catalyzes two reactions in de novo purine nucleotide biosynthesis. Catalyzes the breakdown of 5-aminoimidazole- (N-succinylocarboxamide) ribotide (SAICAR or 2-[5-amino-1-(5-phospho-beta-D-ribosyl)imidazole-4-carboxamido]succinate) to 5-aminoimidazole-4-carboxamide ribotide (AICAR or 5-amino-1-(5-phospho-beta-D-ribosyl)imidazole-4-carboxamide) and fumarate, and of adenylosuccinate (ADS or N(6)-(1,2-dicarboxyethyl)-AMP) to adenosine monophosphate (AMP) and fumarate. This chain is Adenylosuccinate lyase (purB), found in Deinococcus radiodurans (strain ATCC 13939 / DSM 20539 / JCM 16871 / CCUG 27074 / LMG 4051 / NBRC 15346 / NCIMB 9279 / VKM B-1422 / R1).